Reading from the N-terminus, the 164-residue chain is Endoribonuclease YbeY (164 aa).

Zn(2+)-binding residues include His124, His128, and His134.

It belongs to the endoribonuclease YbeY family. It depends on Zn(2+) as a cofactor.

The protein localises to the cytoplasm. Functionally, single strand-specific metallo-endoribonuclease involved in late-stage 70S ribosome quality control and in maturation of the 3' terminus of the 16S rRNA. This Nitrosomonas europaea (strain ATCC 19718 / CIP 103999 / KCTC 2705 / NBRC 14298) protein is Endoribonuclease YbeY.